The chain runs to 295 residues: UDP-3-O-acyl-N-acetylglucosamine deacetylase (295 aa).

Residues histidine 75, histidine 232, and aspartate 236 each contribute to the Zn(2+) site. Histidine 259 serves as the catalytic Proton donor.

It belongs to the LpxC family. Requires Zn(2+) as cofactor.

It carries out the reaction a UDP-3-O-[(3R)-3-hydroxyacyl]-N-acetyl-alpha-D-glucosamine + H2O = a UDP-3-O-[(3R)-3-hydroxyacyl]-alpha-D-glucosamine + acetate. It functions in the pathway glycolipid biosynthesis; lipid IV(A) biosynthesis; lipid IV(A) from (3R)-3-hydroxytetradecanoyl-[acyl-carrier-protein] and UDP-N-acetyl-alpha-D-glucosamine: step 2/6. Catalyzes the hydrolysis of UDP-3-O-myristoyl-N-acetylglucosamine to form UDP-3-O-myristoylglucosamine and acetate, the committed step in lipid A biosynthesis. In Helicobacter pylori (strain ATCC 700392 / 26695) (Campylobacter pylori), this protein is UDP-3-O-acyl-N-acetylglucosamine deacetylase.